Reading from the N-terminus, the 970-residue chain is GEM-interacting protein (970 aa).

Position 19 is a phosphoserine (serine 19). Disordered stretches follow at residues proline 44 to valine 76, serine 224 to lysine 263, and proline 377 to leucine 478. Over residues proline 56 to serine 65 the composition is skewed to polar residues. Phosphoserine occurs at positions 71, 231, 234, 243, 437, and 441. The F-BAR domain occupies glutamate 81–arginine 344. The span at serine 231–proline 246 shows a compositional bias: polar residues. Residues serine 459–aspartate 472 are compositionally biased toward acidic residues. The Phorbol-ester/DAG-type zinc-finger motif lies at threonine 493 to cysteine 537. In terms of domain architecture, Rho-GAP spans leucine 554 to phenylalanine 757. Residue threonine 660 is modified to Phosphothreonine. Residues leucine 762–arginine 878 are disordered. Positions threonine 766–glycine 778 are enriched in pro residues. Residues glutamate 815 to serine 830 show a composition bias toward polar residues. The span at aspartate 831–glycine 844 shows a compositional bias: basic and acidic residues. Positions valine 847–glycine 863 are enriched in polar residues. Phosphoserine is present on residues serine 885, serine 907, serine 914, serine 919, and serine 923. The segment at glutamate 897–lysine 932 is disordered. Residues glycine 910–serine 923 show a composition bias toward low complexity.

Interacts with GEM through its N-terminal.

In terms of biological role, stimulates, in vitro and in vivo, the GTPase activity of RhoA. The chain is GEM-interacting protein (GMIP) from Homo sapiens (Human).